The following is a 716-amino-acid chain: Beta-galactosidase (716 aa).

The Proton donor role is filled by glutamate 389. The Nucleophile role is filled by glutamate 462.

This sequence belongs to the glycosyl hydrolase 2 family. Homodimer.

The enzyme catalyses Hydrolysis of terminal non-reducing beta-D-galactose residues in beta-D-galactosides.. In terms of biological role, displays beta-galactosidase activity with the artificial chromogenic substrate o-nitrophenyl-beta-D-galactopyranoside (ONPG). In Thermoanaerobacterium thermosulfurigenes (Clostridium thermosulfurogenes), this protein is Beta-galactosidase.